The primary structure comprises 638 residues: Fructose-1,6-bisphosphatase class 3 (638 aa).

This sequence belongs to the FBPase class 3 family. Mn(2+) serves as cofactor.

The enzyme catalyses beta-D-fructose 1,6-bisphosphate + H2O = beta-D-fructose 6-phosphate + phosphate. It participates in carbohydrate biosynthesis; gluconeogenesis. The protein is Fructose-1,6-bisphosphatase class 3 of Pediococcus pentosaceus (strain ATCC 25745 / CCUG 21536 / LMG 10740 / 183-1w).